Consider the following 438-residue polypeptide: LIM domain-containing protein C4F6.12 (438 aa).

Disordered regions lie at residues 1–37 (MHSPIPELPRFERRLTGPRAAPSSPVSTNGSPLNNLV) and 49–78 (TGGRIATPLPQPSLKTPESPLSKRNPTIKQ). Residues 24–37 (SPVSTNGSPLNNLV) show a composition bias toward polar residues. Ser67 and Ser96 each carry phosphoserine. LIM zinc-binding domains follow at residues 256-316 (KSCH…QFSP), 318-375 (CKHC…NKYA), and 376-435 (VKCK…SVKF).

The polypeptide is LIM domain-containing protein C4F6.12 (Schizosaccharomyces pombe (strain 972 / ATCC 24843) (Fission yeast)).